A 488-amino-acid polypeptide reads, in one-letter code: 1-hydroxycarotenoid 3,4-desaturase (488 aa).

Residues E31, K39, 55 to 56 (SL), V247, N275, L431, G461, and 468 to 469 (GI) each bind FAD.

Belongs to the carotenoid/retinoid oxidoreductase family. In terms of assembly, monomer.

It carries out the reaction rhodopin + A = (3E)-3,4-didehydrorhodopin + AH2. It catalyses the reaction 1'-hydroxy-gamma-carotene + A = 1'-hydroxytorulene + AH2. The catalysed reaction is 1-hydroxy-all-trans-1,2-dihydro-neurosporene + A = demethylspheroidene + AH2. The enzyme catalyses 1,1'-dihydroxy-1,1',2,2'-tetrahydroneurosporene + A = 1'-hydroxy-demethylspheroidene + AH2. It carries out the reaction 1,1'-dihydroxy-1,1',2,2'-tetrahydrolycopene + A = 1,1'-dihydroxy-3,4-didehydro-1,2-dihydrolycopene + AH2. It participates in carotenoid biosynthesis. In terms of biological role, catalyzes the introduction of a C-3,4 double bond into 1'-hydroxy-gamma-carotene and rhodopin (1-hydroxylycopene) to yield 1'-hydroxytorulene and (3E)-3,4-didehydrorhodopin, respectively. Can also 1-hydroxy-all-trans-1,2-dihydro-neurosporene, 1,1'-dihydroxy-1,1',2,2'-tetrahydroneurosporene and 1,1'-dihydroxy-1,1',2,2'-tetrahydrolycopene. Probably involved in the synthesis of myxol, a gamma-carotene derivative. May use FAD as a proton acceptor. The polypeptide is 1-hydroxycarotenoid 3,4-desaturase (Flavobacterium sp. (strain P99-3)).